A 1042-amino-acid chain; its full sequence is Isoleucine--tRNA ligase (1042 aa).

Positions 48–58 (PFATGLPHFGH) match the 'HIGH' region motif. The short motif at 594-598 (KMSKS) is the 'KMSKS' region element. Residue Lys-597 participates in ATP binding.

Belongs to the class-I aminoacyl-tRNA synthetase family. IleS type 2 subfamily. In terms of assembly, monomer. Requires Zn(2+) as cofactor.

The protein resides in the cytoplasm. It carries out the reaction tRNA(Ile) + L-isoleucine + ATP = L-isoleucyl-tRNA(Ile) + AMP + diphosphate. In terms of biological role, catalyzes the attachment of isoleucine to tRNA(Ile). As IleRS can inadvertently accommodate and process structurally similar amino acids such as valine, to avoid such errors it has two additional distinct tRNA(Ile)-dependent editing activities. One activity is designated as 'pretransfer' editing and involves the hydrolysis of activated Val-AMP. The other activity is designated 'posttransfer' editing and involves deacylation of mischarged Val-tRNA(Ile). The protein is Isoleucine--tRNA ligase of Borreliella afzelii (strain PKo) (Borrelia afzelii).